The chain runs to 413 residues: Multifunctional CCA protein (413 aa).

Residues glycine 8 and arginine 11 each contribute to the ATP site. CTP contacts are provided by glycine 8 and arginine 11. Mg(2+) contacts are provided by aspartate 21 and aspartate 23. 3 residues coordinate ATP: arginine 91, arginine 137, and arginine 140. Positions 91, 137, and 140 each coordinate CTP. The HD domain occupies 228-329 (TGVHTLMTLS…VKLFDAIDAW (102 aa)).

It belongs to the tRNA nucleotidyltransferase/poly(A) polymerase family. Bacterial CCA-adding enzyme type 1 subfamily. Monomer. Can also form homodimers and oligomers. The cofactor is Mg(2+). It depends on Ni(2+) as a cofactor.

The enzyme catalyses a tRNA precursor + 2 CTP + ATP = a tRNA with a 3' CCA end + 3 diphosphate. It catalyses the reaction a tRNA with a 3' CCA end + 2 CTP + ATP = a tRNA with a 3' CCACCA end + 3 diphosphate. Functionally, catalyzes the addition and repair of the essential 3'-terminal CCA sequence in tRNAs without using a nucleic acid template. Adds these three nucleotides in the order of C, C, and A to the tRNA nucleotide-73, using CTP and ATP as substrates and producing inorganic pyrophosphate. tRNA 3'-terminal CCA addition is required both for tRNA processing and repair. Also involved in tRNA surveillance by mediating tandem CCA addition to generate a CCACCA at the 3' terminus of unstable tRNAs. While stable tRNAs receive only 3'-terminal CCA, unstable tRNAs are marked with CCACCA and rapidly degraded. This chain is Multifunctional CCA protein, found in Salmonella typhimurium (strain LT2 / SGSC1412 / ATCC 700720).